Consider the following 471-residue polypeptide: Neuraminidase (471 aa).

Over M1 to K6 the chain is Intravirion. A helical membrane pass occupies residues L7 to S27. The interval S11–V33 is involved in apical transport and lipid raft association. The Virion surface segment spans residues N28–S471. N32, N47, N56, N57, N67, N68, and N87 each carry an N-linked (GlcNAc...) asparagine; by host glycan. A hypervariable stalk region region spans residues H36 to N87. Residues L90–S471 are head of neuraminidase. 8 disulfide bridges follow: C91–C419, C123–C128, C183–C230, C232–C237, C278–C291, C280–C289, C318–C336, and C423–C450. R117 contacts substrate. N-linked (GlcNAc...) asparagine; by host glycosylation is present at N145. D150 acts as the Proton donor/acceptor in catalysis. Substrate is bound at residue R151. N200 and N234 each carry an N-linked (GlcNAc...) asparagine; by host glycan. Position 276 to 277 (E276 to E277) interacts with substrate. R292 provides a ligand contact to substrate. D293, G297, and D324 together coordinate Ca(2+). R371 is a binding site for substrate. N-linked (GlcNAc...) asparagine; by host glycosylation occurs at N401. Y405 serves as the catalytic Nucleophile.

The protein belongs to the glycosyl hydrolase 34 family. As to quaternary structure, homotetramer. Ca(2+) is required as a cofactor. N-glycosylated.

It is found in the virion membrane. The protein resides in the host apical cell membrane. The enzyme catalyses Hydrolysis of alpha-(2-&gt;3)-, alpha-(2-&gt;6)-, alpha-(2-&gt;8)- glycosidic linkages of terminal sialic acid residues in oligosaccharides, glycoproteins, glycolipids, colominic acid and synthetic substrates.. Its activity is regulated as follows. Inhibited by the neuraminidase inhibitors zanamivir (Relenza) and oseltamivir (Tamiflu). These drugs interfere with the release of progeny virus from infected cells and are effective against all influenza strains. Resistance to neuraminidase inhibitors is quite rare. Functionally, catalyzes the removal of terminal sialic acid residues from viral and cellular glycoconjugates. Cleaves off the terminal sialic acids on the glycosylated HA during virus budding to facilitate virus release. Additionally helps virus spread through the circulation by further removing sialic acids from the cell surface. These cleavages prevent self-aggregation and ensure the efficient spread of the progeny virus from cell to cell. Otherwise, infection would be limited to one round of replication. Described as a receptor-destroying enzyme because it cleaves a terminal sialic acid from the cellular receptors. May facilitate viral invasion of the upper airways by cleaving the sialic acid moieties on the mucin of the airway epithelial cells. Likely to plays a role in the budding process through its association with lipid rafts during intracellular transport. May additionally display a raft-association independent effect on budding. Plays a role in the determination of host range restriction on replication and virulence. Sialidase activity in late endosome/lysosome traffic seems to enhance virus replication. This Influenza A virus (strain A/Duck/Germany/1949 H10N7) protein is Neuraminidase.